The sequence spans 275 residues: Putative carbamate hydrolase RutD (275 aa).

This sequence belongs to the AB hydrolase superfamily. Hydrolase RutD family.

The enzyme catalyses carbamate + 2 H(+) = NH4(+) + CO2. Involved in pyrimidine catabolism. May facilitate the hydrolysis of carbamate, a reaction that can also occur spontaneously. This chain is Putative carbamate hydrolase RutD, found in Escherichia coli O6:H1 (strain CFT073 / ATCC 700928 / UPEC).